A 139-amino-acid polypeptide reads, in one-letter code: Holo-[acyl-carrier-protein] synthase (139 aa).

Mg(2+) contacts are provided by Asp-8 and Glu-61.

This sequence belongs to the P-Pant transferase superfamily. AcpS family. Mg(2+) is required as a cofactor.

The protein localises to the cytoplasm. It catalyses the reaction apo-[ACP] + CoA = holo-[ACP] + adenosine 3',5'-bisphosphate + H(+). Its function is as follows. Transfers the 4'-phosphopantetheine moiety from coenzyme A to a Ser of acyl-carrier-protein. In Rhodopseudomonas palustris (strain BisA53), this protein is Holo-[acyl-carrier-protein] synthase.